The primary structure comprises 223 residues: Phosphoribosylformylglycinamidine synthase subunit PurQ (223 aa).

Residues 2–223 (KTAIIQLPGL…FQSALELAKG (222 aa)) enclose the Glutamine amidotransferase type-1 domain. Residue Cys-86 is the Nucleophile of the active site. Active-site residues include His-196 and Glu-198.

In terms of assembly, part of the FGAM synthase complex composed of 1 PurL, 1 PurQ and 2 PurS subunits.

The protein resides in the cytoplasm. It catalyses the reaction N(2)-formyl-N(1)-(5-phospho-beta-D-ribosyl)glycinamide + L-glutamine + ATP + H2O = 2-formamido-N(1)-(5-O-phospho-beta-D-ribosyl)acetamidine + L-glutamate + ADP + phosphate + H(+). The enzyme catalyses L-glutamine + H2O = L-glutamate + NH4(+). Its pathway is purine metabolism; IMP biosynthesis via de novo pathway; 5-amino-1-(5-phospho-D-ribosyl)imidazole from N(2)-formyl-N(1)-(5-phospho-D-ribosyl)glycinamide: step 1/2. Functionally, part of the phosphoribosylformylglycinamidine synthase complex involved in the purines biosynthetic pathway. Catalyzes the ATP-dependent conversion of formylglycinamide ribonucleotide (FGAR) and glutamine to yield formylglycinamidine ribonucleotide (FGAM) and glutamate. The FGAM synthase complex is composed of three subunits. PurQ produces an ammonia molecule by converting glutamine to glutamate. PurL transfers the ammonia molecule to FGAR to form FGAM in an ATP-dependent manner. PurS interacts with PurQ and PurL and is thought to assist in the transfer of the ammonia molecule from PurQ to PurL. In Bartonella henselae (strain ATCC 49882 / DSM 28221 / CCUG 30454 / Houston 1) (Rochalimaea henselae), this protein is Phosphoribosylformylglycinamidine synthase subunit PurQ.